The chain runs to 1527 residues: DNA (cytosine-5)-methyltransferase 1A (1527 aa).

Disordered stretches follow at residues 1-62 (MAKS…PKRA) and 661-718 (GDTK…KEIK). Acidic residues-rich tracts occupy residues 25-36 (EPVENENLESEF) and 664-692 (KEEDQNEPKEIDDDQEENEDNDAEEEVNV). Residues 709–718 (SSADTRKEIK) are compositionally biased toward basic and acidic residues. 2 consecutive BAH domains span residues 742–874 (LSIS…FSLP) and 910–1049 (ITYN…KQLP). Positions 1092–1526 (LATLDIFAGC…RKLKQAIDAK (435 aa)) constitute an SAM-dependent MTase C5-type domain. The active site involves C1197.

This sequence belongs to the class I-like SAM-binding methyltransferase superfamily. C5-methyltransferase family. Expressed in roots and inflorescences. Expressed in roots, panicles, anthers, pistils, endosperm and imbibed embryos. Expressed in tissues containing actively replicating and dividing cells, such as shoot and root meristems.

The protein localises to the nucleus. It carries out the reaction a 2'-deoxycytidine in DNA + S-adenosyl-L-methionine = a 5-methyl-2'-deoxycytidine in DNA + S-adenosyl-L-homocysteine + H(+). Probably methylates CpG residues and maintains DNA methylation. May be involved in methylation-dependent gene silencing. May play a minor role in the maintenance of DNA methylation. This is DNA (cytosine-5)-methyltransferase 1A from Oryza sativa subsp. japonica (Rice).